The primary structure comprises 395 residues: Thyrotropin-releasing hormone receptor (395 aa).

The Extracellular portion of the chain corresponds to 1 to 30 (MENGTGDEQNHTGLLLSSQEFVTAEYQVVT). N-linked (GlcNAc...) asparagine glycosylation is found at asparagine 3 and asparagine 10. Residues 31–53 (ILLVLLICGLGIVGNIMVVLVVL) traverse the membrane as a helical segment. Residues 54-63 (RTKHMRTPTN) lie on the Cytoplasmic side of the membrane. A helical membrane pass occupies residues 64 to 85 (CYLVSLAVADLMVLVAAGLPNI). The Extracellular portion of the chain corresponds to 86 to 101 (TESLYKSWVYGYVGCL). Cysteine 100 and cysteine 181 form a disulfide bridge. A helical membrane pass occupies residues 102-123 (CITYLQYLGINASSFSITAFTI). Topologically, residues 124–146 (ERYIAICHPIKAQFLCTFSRAKK) are cytoplasmic. A helical transmembrane segment spans residues 147–170 (IIIFVWSFASVYCMLWFFLLDLNI). Residues 171 to 195 (AVYKDTTVVSCGYKVSRSYYSPIYM) are Extracellular-facing. Residues 196 to 217 (MDFGIFYVLPMVLATVLYGLIA) form a helical membrane-spanning segment. Over 218–268 (RILFLNPIPSDPKENSNTWKNDMAQQNKTVNSKMTNKSFNSTIASRRQVTK) the chain is Cytoplasmic. Residues 269-290 (MLAVVVVLFAFLWMPYRTLVVV) form a helical membrane-spanning segment. Residues 291–298 (NSFLSSPF) lie on the Extracellular side of the membrane. The helical transmembrane segment at 299–321 (QENWFLLFCRICIYLNSAINPVI) threads the bilayer. At 322 to 395 (YNLMSQKFRA…IGDTCLSSEA (74 aa)) the chain is on the cytoplasmic side.

Belongs to the G-protein coupled receptor 1 family.

It localises to the cell membrane. Receptor for thyrotropin-releasing hormone (TRH). Upon ligand binding, this G-protein-coupled receptor triggers activation of the phosphatidylinositol (IP3)-calcium-protein kinase C (PKC) pathway. In Gallus gallus (Chicken), this protein is Thyrotropin-releasing hormone receptor (TRHR).